Here is a 245-residue protein sequence, read N- to C-terminus: Balbiani ring A 28 kDa protein (245 aa).

The signal sequence occupies residues 1-16 (MKSIIKHILFVVLLIS). 5 positions are modified to phosphoserine: serine 33, serine 40, serine 92, serine 93, and serine 115.

In terms of tissue distribution, salivary gland.

Its subcellular location is the secreted. Its function is as follows. Used by the larvae to construct a supramolecular structure, the larval tube. The polypeptide is Balbiani ring A 28 kDa protein (Chironomus thummi thummi (Midge)).